The chain runs to 306 residues: Nod factor export ATP-binding protein I (306 aa).

One can recognise an ABC transporter domain in the interval 8–238; it reads IDLVGVRKSF…HIGCNVIEIY (231 aa). 40-47 is a binding site for ATP; that stretch reads GPNGAGKS.

Belongs to the ABC transporter superfamily. Lipooligosaccharide exporter (TC 3.A.1.102) family. As to quaternary structure, the complex is composed of two ATP-binding proteins (NodI) and two transmembrane proteins (NodJ).

The protein resides in the cell inner membrane. Functionally, part of the ABC transporter complex NodIJ involved in the export of the nodulation factors (Nod factors), the bacterial signal molecules that induce symbiosis and subsequent nodulation induction. Nod factors are LCO (lipo-chitin oligosaccharide), a modified beta-1,4-linked N-acetylglucosamine oligosaccharide. This subunit is responsible for energy coupling to the transport system. This Bradyrhizobium diazoefficiens (strain JCM 10833 / BCRC 13528 / IAM 13628 / NBRC 14792 / USDA 110) protein is Nod factor export ATP-binding protein I.